Here is a 229-residue protein sequence, read N- to C-terminus: Large ribosomal subunit protein uL1 (229 aa).

It belongs to the universal ribosomal protein uL1 family. Part of the 50S ribosomal subunit.

Its function is as follows. Binds directly to 23S rRNA. The L1 stalk is quite mobile in the ribosome, and is involved in E site tRNA release. Protein L1 is also a translational repressor protein, it controls the translation of the L11 operon by binding to its mRNA. The sequence is that of Large ribosomal subunit protein uL1 from Histophilus somni (strain 2336) (Haemophilus somnus).